Consider the following 65-residue polypeptide: Sarcoplasmic/endoplasmic reticulum calcium ATPase regulator ARLN (65 aa).

Met-1 bears the N-acetylmethionine mark. Positions 1-38 are disordered; the sequence is MEVGQAASGTDGVRERRGSSAARRRSQDEPVQSGMNGI. A phosphoserine mark is found at Ser-19 and Ser-26. Residues 44-64 form a helical membrane-spanning segment; that stretch reads WLDLWLFILFDLALFIFVYLL.

Homooligomer. Can also form heterooligomers with other sarcoplasmic/endoplasmic reticulum calcium ATPase (SERCA) regulators ERLN, PLN, SLN and STRIT1/DWORF. Monomer. Interacts as a monomer with ATP2A2/SERCA2; the interaction results in inhibition of ATP2A2 Ca(2+) affinity.

The protein localises to the endoplasmic reticulum membrane. Functionally, inhibits the activity of the calcium ATPases ATP2A2/SERCA2 and ATP2A3/SERCA3 by decreasing their apparent affinity for Ca(2+). The protein is Sarcoplasmic/endoplasmic reticulum calcium ATPase regulator ARLN (Arln) of Rattus norvegicus (Rat).